Reading from the N-terminus, the 515-residue chain is Cytochrome P450 1A2 (515 aa).

An O-linked (GlcNAc) serine glycan is attached at Ser-69. Substrate is bound at residue Phe-226. Heme is bound at residue Cys-458.

The protein belongs to the cytochrome P450 family. As to quaternary structure, interacts with PGRMC1; the interaction requires PGRMC1 homodimerization. Requires heme as cofactor.

It localises to the endoplasmic reticulum membrane. Its subcellular location is the microsome membrane. The catalysed reaction is an organic molecule + reduced [NADPH--hemoprotein reductase] + O2 = an alcohol + oxidized [NADPH--hemoprotein reductase] + H2O + H(+). The enzyme catalyses 17beta-estradiol + reduced [NADPH--hemoprotein reductase] + O2 = 2-hydroxy-17beta-estradiol + oxidized [NADPH--hemoprotein reductase] + H2O + H(+). It catalyses the reaction 17beta-estradiol + reduced [NADPH--hemoprotein reductase] + O2 = 4-hydroxy-17beta-estradiol + oxidized [NADPH--hemoprotein reductase] + H2O + H(+). It carries out the reaction estrone + reduced [NADPH--hemoprotein reductase] + O2 = 2-hydroxyestrone + oxidized [NADPH--hemoprotein reductase] + H2O + H(+). The catalysed reaction is estrone + reduced [NADPH--hemoprotein reductase] + O2 = 4-hydroxyestrone + oxidized [NADPH--hemoprotein reductase] + H2O + H(+). The enzyme catalyses cholesterol + reduced [NADPH--hemoprotein reductase] + O2 = 25-hydroxycholesterol + oxidized [NADPH--hemoprotein reductase] + H2O + H(+). It catalyses the reaction all-trans-retinol + reduced [NADPH--hemoprotein reductase] + O2 = all-trans-retinal + oxidized [NADPH--hemoprotein reductase] + 2 H2O + H(+). It carries out the reaction all-trans-retinal + reduced [NADPH--hemoprotein reductase] + O2 = all-trans-retinoate + oxidized [NADPH--hemoprotein reductase] + H2O + 2 H(+). The catalysed reaction is (5Z,8Z,11Z,14Z)-eicosatetraenoate + reduced [NADPH--hemoprotein reductase] + O2 = (14R,15S)-epoxy-(5Z,8Z,11Z)-eicosatrienoate + oxidized [NADPH--hemoprotein reductase] + H2O + H(+). The enzyme catalyses (5Z,8Z,11Z,14Z)-eicosatetraenoate + reduced [NADPH--hemoprotein reductase] + O2 = (14S,15R)-epoxy-(5Z,8Z,11Z)-eicosatrienoate + oxidized [NADPH--hemoprotein reductase] + H2O + H(+). It catalyses the reaction (5Z,8Z,11Z,14Z,17Z)-eicosapentaenoate + reduced [NADPH--hemoprotein reductase] + O2 = (17R,18S)-epoxy-(5Z,8Z,11Z,14Z)-eicosatetraenoate + oxidized [NADPH--hemoprotein reductase] + H2O + H(+). It carries out the reaction (4Z,7Z,10Z,13Z,16Z,19Z)-docosahexaenoate + reduced [NADPH--hemoprotein reductase] + O2 = (19R,20S)-epoxy-(4Z,7Z,10Z,13Z,16Z)-docosapentaenoate + oxidized [NADPH--hemoprotein reductase] + H2O + H(+). The catalysed reaction is (5S)-hydroperoxy-(6E,8Z,11Z,14Z)-eicosatetraenoate = 5-oxo-(6E,8Z,11Z,14Z)-eicosatetraenoate + H2O. The enzyme catalyses (12S)-hydroperoxy-(5Z,8Z,10E,14Z)-eicosatetraenoate = 12-oxo-(5Z,8Z,10E,14Z)-eicosatetraenoate + H2O. It catalyses the reaction (15S)-hydroperoxy-(5Z,8Z,11Z,13E)-eicosatetraenoate = 15-oxo-(5Z,8Z,11Z,13E)-eicosatetraenoate + H2O. It carries out the reaction (13S)-hydroperoxy-(9Z,11E)-octadecadienoate = 13-oxo-(9Z,11E)-octadecadienoate + H2O. The catalysed reaction is (5Z,8Z,11Z,14Z)-eicosatetraenoate + reduced [NADPH--hemoprotein reductase] + O2 = 13-hydroxy-(5Z,8Z,11Z,14Z)-eicosatetraenoate + oxidized [NADPH--hemoprotein reductase] + H2O + H(+). The enzyme catalyses (5Z,8Z,11Z,14Z)-eicosatetraenoate + reduced [NADPH--hemoprotein reductase] + O2 = 19-hydroxy-(5Z,8Z,11Z,14Z)-eicosatetraenoate + oxidized [NADPH--hemoprotein reductase] + H2O + H(+). It catalyses the reaction (9Z,12Z)-octadecadienoate + reduced [NADPH--hemoprotein reductase] + O2 = 11-hydroxy-(9Z,12Z)-octadecadienoate + oxidized [NADPH--hemoprotein reductase] + H2O + H(+). It functions in the pathway cofactor metabolism; retinol metabolism. Its pathway is steroid metabolism; cholesterol metabolism. It participates in lipid metabolism; arachidonate metabolism. A cytochrome P450 monooxygenase involved in the metabolism of various endogenous substrates, including fatty acids, steroid hormones and vitamins. Mechanistically, uses molecular oxygen inserting one oxygen atom into a substrate, and reducing the second into a water molecule, with two electrons provided by NADPH via cytochrome P450 reductase (NADPH--hemoprotein reductase). Catalyzes the hydroxylation of carbon-hydrogen bonds. Exhibits high catalytic activity for the formation of hydroxyestrogens from estrone (E1) and 17beta-estradiol (E2), namely 2-hydroxy E1 and E2. Metabolizes cholesterol toward 25-hydroxycholesterol, a physiological regulator of cellular cholesterol homeostasis. May act as a major enzyme for all-trans retinoic acid biosynthesis in the liver. Catalyzes two successive oxidative transformation of all-trans retinol to all-trans retinal and then to the active form all-trans retinoic acid. Primarily catalyzes stereoselective epoxidation of the last double bond of polyunsaturated fatty acids (PUFA), displaying a strong preference for the (R,S) stereoisomer. Catalyzes bisallylic hydroxylation and omega-1 hydroxylation of PUFA. May also participate in eicosanoids metabolism by converting hydroperoxide species into oxo metabolites (lipoxygenase-like reaction, NADPH-independent). Plays a role in the oxidative metabolism of xenobiotics. Catalyzes the N-hydroxylation of heterocyclic amines and the O-deethylation of phenacetin. Metabolizes caffeine via N3-demethylation. This Cavia porcellus (Guinea pig) protein is Cytochrome P450 1A2 (CYP1A2).